We begin with the raw amino-acid sequence, 268 residues long: Shikimate dehydrogenase (NADP(+)) (268 aa).

Residues Ser13–Ser15 and Thr60 contribute to the shikimate site. The active-site Proton acceptor is the Lys64. Glu76 contributes to the NADP(+) binding site. Positions 85 and 100 each coordinate shikimate. NADP(+) contacts are provided by residues Gly124–Ala128, Asn148–Arg153, and Ile209. Shikimate is bound at residue Tyr211. Gly232 is an NADP(+) binding site.

This sequence belongs to the shikimate dehydrogenase family. In terms of assembly, homodimer.

The catalysed reaction is shikimate + NADP(+) = 3-dehydroshikimate + NADPH + H(+). It participates in metabolic intermediate biosynthesis; chorismate biosynthesis; chorismate from D-erythrose 4-phosphate and phosphoenolpyruvate: step 4/7. In terms of biological role, involved in the biosynthesis of the chorismate, which leads to the biosynthesis of aromatic amino acids. Catalyzes the reversible NADPH linked reduction of 3-dehydroshikimate (DHSA) to yield shikimate (SA). The protein is Shikimate dehydrogenase (NADP(+)) of Staphylococcus aureus (strain USA300).